Here is a 1360-residue protein sequence, read N- to C-terminus: DNA mismatch repair protein Msh6 (1360 aa).

The segment at 1-84 is disordered; sequence MSRQSTLYSF…GLRRSVAPAA (84 aa). Phosphoserine is present on residues S14, S41, and S43. Residues 33–51 show a composition bias toward low complexity; the sequence is RAAAAPGASPSPGGDAAWS. K70 is modified (N6-acetyllysine). A phosphoserine mark is found at S79, S91, S137, S200, S219, and S227. A PWWP domain is found at 92–154; the sequence is PGDLVWAKME…KRLLKPYTGS (63 aa). Residues 195–362 are disordered; it reads VCDEPSEPEE…SGGGDDSSRP (168 aa). Acidic residues-rich tracts occupy residues 198 to 209 and 219 to 230; these read EPSEPEEEEEME and SEEDNEIESEEE. A compositionally biased stretch (basic residues) spans 240–249; sequence RSSRQIKKRR. 4 positions are modified to phosphoserine: S252, S254, S256, and S261. Residues 263–273 are compositionally biased toward basic and acidic residues; sequence VEFKPDTKEEG. Residue T269 is modified to Phosphothreonine. Phosphoserine occurs at positions 274, 275, 279, 280, and 309. The span at 320 to 351 shows a compositional bias: polar residues; the sequence is PSATKQATSISSETKNTLRAFSAPQNSESQAH. T488 bears the Phosphothreonine mark. Position 504 is an N6-acetyllysine (K504). 2 positions are modified to phosphoserine: S830 and S935. T1010 carries the phosphothreonine modification. 1134-1141 provides a ligand contact to ATP; that stretch reads GPNMGGKS.

This sequence belongs to the DNA mismatch repair MutS family. As to quaternary structure, component of the DNA mismatch repair (MMR) complex composed at least of MSH2, MSH3, MSH6, PMS1 and MLH1. Heterodimer consisting of MSH2-MSH6 (MutS alpha). Forms a ternary complex with MutL alpha (MLH1-PMS1). Interacts with MCM9. Part of the BRCA1-associated genome surveillance complex (BASC), which contains BRCA1, MSH2, MSH6, MLH1, ATM, BLM, PMS2 and the RAD50-MRE11-NBS1 protein complex. This association could be a dynamic process changing throughout the cell cycle and within subnuclear domains. In terms of assembly, (Microbial infection) Interacts with herpes simplex virus 1 protein UL12. Post-translationally, the N-terminus is blocked. Phosphorylated by PRKCZ, which may prevent MutS alpha degradation by the ubiquitin-proteasome pathway.

The protein resides in the nucleus. It is found in the chromosome. In terms of biological role, component of the post-replicative DNA mismatch repair system (MMR). Heterodimerizes with MSH2 to form MutS alpha, which binds to DNA mismatches thereby initiating DNA repair. When bound, MutS alpha bends the DNA helix and shields approximately 20 base pairs, and recognizes single base mismatches and dinucleotide insertion-deletion loops (IDL) in the DNA. After mismatch binding, forms a ternary complex with the MutL alpha heterodimer, which is thought to be responsible for directing the downstream MMR events, including strand discrimination, excision, and resynthesis. ATP binding and hydrolysis play a pivotal role in mismatch repair functions. The ATPase activity associated with MutS alpha regulates binding similar to a molecular switch: mismatched DNA provokes ADP--&gt;ATP exchange, resulting in a discernible conformational transition that converts MutS alpha into a sliding clamp capable of hydrolysis-independent diffusion along the DNA backbone. This transition is crucial for mismatch repair. MutS alpha may also play a role in DNA homologous recombination repair. Recruited on chromatin in G1 and early S phase via its PWWP domain that specifically binds trimethylated 'Lys-36' of histone H3 (H3K36me3): early recruitment to chromatin to be replicated allowing a quick identification of mismatch repair to initiate the DNA mismatch repair reaction. The polypeptide is DNA mismatch repair protein Msh6 (Homo sapiens (Human)).